Consider the following 264-residue polypeptide: Major prion protein (264 aa).

The N-terminal stretch at 1 to 24 (MVKSHIGSWILVLFVAMWSDVGLC) is a signal peptide. Residues 25 to 41 (KKRPKPGGGWNTGGSRY) form an interaction with ADGRG6 region. An interaction with GRB2, ERI3 and SYN1 region spans residues 25-241 (KKRPKPGGGW…ESQAYYQRGA (217 aa)). The tract at residues 28-119 (PKPGGGWNTG…WNKPSKPKTN (92 aa)) is disordered. 6 repeat units span residues 54–62 (PQGGGGWGQ), 63–70 (PHGGGWGQ), 71–78 (PHGGGWGQ), 79–86 (PHGGGWGQ), 87–94 (PHGGGWGQ), and 95–103 (PHGGGGWGQ). The 6 X 8 AA tandem repeats of P-H-G-G-G-W-G-Q stretch occupies residues 54–103 (PQGGGGWGQPHGGGWGQPHGGGWGQPHGGGWGQPHGGGWGQPHGGGGWGQ). Residues 55 to 107 (QGGGGWGQPHGGGWGQPHGGGWGQPHGGGWGQPHGGGWGQPHGGGGWGQGGTH) are compositionally biased toward gly residues. Cu(2+)-binding residues include His-72, Gly-73, Gly-74, His-80, Gly-81, Gly-82, His-88, Gly-89, Gly-90, His-96, Gly-98, and Gly-99. Cys-190 and Cys-225 are joined by a disulfide. 2 N-linked (GlcNAc...) asparagine glycosylation sites follow: Asn-192 and Asn-208. Residue Ala-241 is the site of GPI-anchor amidated alanine attachment. The propeptide at 242-264 (SVILFSSPPVILLISFLIFLIVG) is removed in mature form.

It belongs to the prion family. In terms of assembly, monomer and homodimer. Has a tendency to aggregate into amyloid fibrils containing a cross-beta spine, formed by a steric zipper of superposed beta-strands. Soluble oligomers may represent an intermediate stage on the path to fibril formation. Copper binding may promote oligomerization. Interacts with GRB2, APP, ERI3/PRNPIP and SYN1. Mislocalized cytosolically exposed PrP interacts with MGRN1; this interaction alters MGRN1 subcellular location and causes lysosomal enlargement. Interacts with APP. Interacts with KIAA1191. Interacts with ADGRG6.

It is found in the cell membrane. The protein localises to the golgi apparatus. Functionally, its primary physiological function is unclear. May play a role in neuronal development and synaptic plasticity. May be required for neuronal myelin sheath maintenance. May promote myelin homeostasis through acting as an agonist for ADGRG6 receptor. May play a role in iron uptake and iron homeostasis. Soluble oligomers are toxic to cultured neuroblastoma cells and induce apoptosis (in vitro). Association with GPC1 (via its heparan sulfate chains) targets PRNP to lipid rafts. Also provides Cu(2+) or Zn(2+) for the ascorbate-mediated GPC1 deaminase degradation of its heparan sulfate side chains. In Bos indicus x Bos taurus (Hybrid cattle), this protein is Major prion protein (PRNP).